A 440-amino-acid chain; its full sequence is UDP-glucose 6-dehydrogenase YwqF (440 aa).

Residues 2–19 (NITV…GVSL), Val-11, Asp-30, Lys-35, Thr-121, and Glu-155 each bind NAD(+). Residues 151-155 (EFLRE), Lys-204, Asn-208, 249-253 (FLKAG), and Gly-257 contribute to the substrate site. Cys-260 acts as the Nucleophile in catalysis. Residue Lys-263 coordinates NAD(+). Lys-320 lines the substrate pocket. Arg-327 contributes to the NAD(+) binding site.

Belongs to the UDP-glucose/GDP-mannose dehydrogenase family. Post-translationally, phosphorylated on tyrosine residue(s). Phosphorylated by YwqD and dephosphorylated by YwqE in vitro.

It is found in the cytoplasm. It carries out the reaction UDP-alpha-D-glucose + 2 NAD(+) + H2O = UDP-alpha-D-glucuronate + 2 NADH + 3 H(+). It participates in nucleotide-sugar biosynthesis; UDP-alpha-D-glucuronate biosynthesis; UDP-alpha-D-glucuronate from UDP-alpha-D-glucose: step 1/1. With respect to regulation, competitively inhibited by UDP-glucose. Activated by phosphorylation, which may increase affinity for NAD(+); inhibited by dephosphorylation. In terms of biological role, catalyzes the conversion of UDP-glucose into UDP-glucuronate, one of the precursors of teichuronic acid. This is UDP-glucose 6-dehydrogenase YwqF (ywqF) from Bacillus subtilis (strain 168).